The sequence spans 489 residues: Cysteine--tRNA ligase (489 aa).

Position 27 (Cys27) interacts with Zn(2+). The 'HIGH' region motif lies at 29 to 39 (VTVYDLCHLGH). Zn(2+) contacts are provided by Cys211, His236, and Glu240. The 'KMSKS' region signature appears at 268-272 (KMSKS). Lys271 serves as a coordination point for ATP.

The protein belongs to the class-I aminoacyl-tRNA synthetase family. As to quaternary structure, monomer. Zn(2+) is required as a cofactor.

It localises to the cytoplasm. The catalysed reaction is tRNA(Cys) + L-cysteine + ATP = L-cysteinyl-tRNA(Cys) + AMP + diphosphate. This is Cysteine--tRNA ligase from Prochlorococcus marinus (strain MIT 9312).